The primary structure comprises 306 residues: Curved DNA-binding protein (306 aa).

One can recognise a J domain in the interval Asp-5–Trp-69.

The protein resides in the cytoplasm. The protein localises to the nucleoid. Its function is as follows. DNA-binding protein that preferentially recognizes a curved DNA sequence. It is probably a functional analog of DnaJ; displays overlapping activities with DnaJ, but functions under different conditions, probably acting as a molecular chaperone in an adaptive response to environmental stresses other than heat shock. Lacks autonomous chaperone activity; binds native substrates and targets them for recognition by DnaK. Its activity is inhibited by the binding of CbpM. This Salmonella choleraesuis (strain SC-B67) protein is Curved DNA-binding protein.